The following is a 192-amino-acid chain: EF-hand protein 5 (192 aa).

The interval 1–36 is disordered; that stretch reads MKDKAPVSSQQDHFSRGGAVGGKPISDVRGTSRPFY. EF-hand domains lie at 46-80, 81-118, 119-154, and 155-190; these read AELA…GLHL, SDEE…EVDD, TMLE…GGEC, and STPE…HRLN. Ca(2+) contacts are provided by Thr100, Glu102, Asp107, Asp132, and Thr136.

The sequence is that of EF-hand protein 5 from Trypanosoma brucei brucei.